The following is a 215-amino-acid chain: LexA repressor (215 aa).

The H-T-H motif DNA-binding region spans 28 to 48 (RAEIAAELGFSSPNAAEEHLR). Active-site for autocatalytic cleavage activity residues include S133 and K170.

The protein belongs to the peptidase S24 family. As to quaternary structure, homodimer.

It catalyses the reaction Hydrolysis of Ala-|-Gly bond in repressor LexA.. Its function is as follows. Represses a number of genes involved in the response to DNA damage (SOS response), including recA and lexA. In the presence of single-stranded DNA, RecA interacts with LexA causing an autocatalytic cleavage which disrupts the DNA-binding part of LexA, leading to derepression of the SOS regulon and eventually DNA repair. This Burkholderia ambifaria (strain MC40-6) protein is LexA repressor.